The following is a 246-amino-acid chain: Large ribosomal subunit protein uL30-like 1 (246 aa).

Residue S54 is modified to Phosphoserine.

Belongs to the universal ribosomal protein uL30 family.

This Mus musculus (Mouse) protein is Large ribosomal subunit protein uL30-like 1 (Rpl7l1).